The sequence spans 456 residues: Pantothenate kinase 2, mitochondrial (456 aa).

Positions 16 to 89 (AGRFGAPMER…TSAGRPRAEG (74 aa)) are disordered. Low complexity-rich tracts occupy residues 28 to 39 (RAAATSAAVGES) and 55 to 65 (SSAAPSGSGEA). 3 positions are modified to phosphoserine: S55, S56, and S75. The Nuclear export signal signature appears at 154–161 (LELKDLTL). E224 acts as the Proton acceptor in catalysis. Residues S278, S281, and R293 each contribute to the acetyl-CoA site.

This sequence belongs to the type II pantothenate kinase family. Homodimer.

The protein localises to the cytoplasm. Its subcellular location is the cytosol. The catalysed reaction is (R)-pantothenate + ATP = (R)-4'-phosphopantothenate + ADP + H(+). Its pathway is cofactor biosynthesis; coenzyme A biosynthesis; CoA from (R)-pantothenate: step 1/5. Its activity is regulated as follows. Inhibited by acetyl-CoA. Inhibited by calcium hopantenate. Activated by palmitoylcarnitine. Catalyzes the phosphorylation of pantothenate to generate 4'-phosphopantothenate in the first and rate-determining step of coenzyme A (CoA) synthesis. The protein is Pantothenate kinase 2, mitochondrial (Pank2) of Mus musculus (Mouse).